The following is a 473-amino-acid chain: Mediator of RNA polymerase II transcription subunit 29 (473 aa).

Residues 1–12 show a composition bias toward polar residues; it reads MSGQGPPSNLTP. Disordered stretches follow at residues 1-319 and 444-473; these read MSGQ…NEEQ and STMEKMRRRQKKWKDQQQQQENAEDAEMAE. The segment covering 13–50 has biased composition (low complexity); that stretch reads QQQHMIMQQQQQQQMMRQQQIQQQQLHQRQLQQQQAQQ. A compositionally biased stretch (polar residues) spans 51–62; that stretch reads SYQRSRTPQMQQ. 2 stretches are compositionally biased toward low complexity: residues 111 to 123 and 130 to 139; these read QMMQQQMGMNQPM and VSRPGSVAPP. Polar residues-rich tracts occupy residues 148–183 and 255–269; these read TGPSSNQMDQMGGQSQYSHHLQPQQPLSRPGSQQSH and PPGSAQAPSSVQPGS. Low complexity-rich tracts occupy residues 272–286 and 294–308; these read APGSLQAPASQQPPA and AASGSVAGPASAAPA.

Belongs to the Mediator complex subunit 29 family. As to quaternary structure, component of the Mediator complex.

Its subcellular location is the nucleus. Functionally, component of the Mediator complex, a coactivator involved in the regulated transcription of nearly all RNA polymerase II-dependent genes. Mediator functions as a bridge to convey information from gene-specific regulatory proteins to the basal RNA polymerase II transcription machinery. Mediator is recruited to promoters by direct interactions with regulatory proteins and serves as a scaffold for the assembly of a functional preinitiation complex with RNA polymerase II and the general transcription factors. This chain is Mediator of RNA polymerase II transcription subunit 29 (mdt-29), found in Caenorhabditis briggsae.